Consider the following 253-residue polypeptide: Flagellar brake protein YcgR (253 aa).

Residues 120–239 (QRRDFYRFAT…NEGLINRYVY (120 aa)) enclose the PilZ domain.

This sequence belongs to the YcgR family. Monomer. Interacts with the flagellar basal bodies.

Its subcellular location is the bacterial flagellum basal body. In terms of biological role, acts as a flagellar brake, regulating swimming and swarming in a bis-(3'-5') cyclic diguanylic acid (c-di-GMP)-dependent manner. Binds 1 c-di-GMP dimer per subunit. Increasing levels of c-di-GMP lead to decreased motility. The sequence is that of Flagellar brake protein YcgR from Methylotenera mobilis (strain JLW8 / ATCC BAA-1282 / DSM 17540).